The following is a 492-amino-acid chain: MTDLHRLSIRELAEGLSQAKFSSRELTEHYLKRIAKIDPQVKSYVTVTPEQALREADAADAALKAGNATALTGIPLAHKDIFCTKGIKTTAGSKMLDNFISPYDATVVEKTKAAGLVTLGKVNMDEFAMGSTSESSYVGATSNPWALDHVPGGSSGGSAAAVAADLAPFATGTDTGGSIRQPASFCGLTGLKPTYGRVSRFGIIAYASSLDQAGPMARSAEDCAYLMNVIAGHDAKDSTSVKKELDDYVANLNNTSVKGLRIGIPKQYFNVAGLDADVKARVEESLKKLEEMGAALVEIDLNMTEAYVPTYYLIAPAEASSNLSRYDGVRYGYRCENPADLMDLYKRSRSEGFGPEVQRRILIGTYALSAGYYDAYYVKAQKVRRLIQQDFLKAFENVDVIAAPAAPTTAYKIGASLDPVEMYLGDIYTIAVNLAGLPAINAPVGFDKDNLPVGLQLIGNYWSESQLLSIVHQYQQNTDWHTKRAAIAEENA.

Active-site charge relay system residues include lysine 79 and serine 154. Serine 178 acts as the Acyl-ester intermediate in catalysis.

This sequence belongs to the amidase family. GatA subfamily. As to quaternary structure, heterotrimer of A, B and C subunits.

It carries out the reaction L-glutamyl-tRNA(Gln) + L-glutamine + ATP + H2O = L-glutaminyl-tRNA(Gln) + L-glutamate + ADP + phosphate + H(+). Functionally, allows the formation of correctly charged Gln-tRNA(Gln) through the transamidation of misacylated Glu-tRNA(Gln) in organisms which lack glutaminyl-tRNA synthetase. The reaction takes place in the presence of glutamine and ATP through an activated gamma-phospho-Glu-tRNA(Gln). In Acinetobacter baumannii (strain AB0057), this protein is Glutamyl-tRNA(Gln) amidotransferase subunit A.